The primary structure comprises 484 residues: Glycogen synthase (484 aa).

Lys15 serves as a coordination point for ADP-alpha-D-glucose.

Belongs to the glycosyltransferase 1 family. Bacterial/plant glycogen synthase subfamily.

The catalysed reaction is [(1-&gt;4)-alpha-D-glucosyl](n) + ADP-alpha-D-glucose = [(1-&gt;4)-alpha-D-glucosyl](n+1) + ADP + H(+). It participates in glycan biosynthesis; glycogen biosynthesis. Functionally, synthesizes alpha-1,4-glucan chains using ADP-glucose. The sequence is that of Glycogen synthase from Anoxybacillus flavithermus (strain DSM 21510 / WK1).